A 775-amino-acid chain; its full sequence is MATPDSLALFTGLGLSENKARETLKNAALSTQLREAATQAQQTLGSTIDKATGTLLYGLASRLRDTRRLSFLVGYIANKKIHTELQLSAALEYVRSHPLDPIDTKDFEQECGVGVVVTPEQIEEAVEATINRHRPQLLVERYRFSMGLLMGEARAALRWADGKMIKNEVDMQVLHLLGPKMEADLEKKPKVAKARLEETDRKTAKDVVENGEVAGQTLSLMEQLRGEALKFHKPGENYKTPGYVTTPHTMDLLKQHLEITGGQVRTRFPPEPNGILHIGHAKAINFNFGYAKANNGICFLRFDDTNPEKEEAKFFTAIYDMVTWLGYTPYKVTYASDYFDQLYAWAVELIRRGQAYVCHQRGEELKGHNPLPSPWRDRPIEESLLLFEAMRKGKFAEGEATLRMKLVMEDGKMDPVAYRVKYTPHHRTGDKWCIYPTYDYTHCLCDSIEHITHSLCTKEFQARRSSYFWLCNALDVYCPVQWEYGRLNLHYAVVSKRKILQLVAAGAVRDWDDPRLFTLTALRRRGFPPEAINNFCARVGVTVAQTTMEPHLLEACVRDVLNDTAPRAMAVLEPLQVVITNFPAPKPLDIRVPNFPADETKGFHQVPFASTVFIERTDFKEESEPGYKRLAWGQPVGLRHTGYVIELQHVVRGSSGCVECLEVTCRRADAGEKPKAFIHWVSQPLVCEIRLYERLFQHKNPEDPVEVPGGFLSDLNPASLQVIKGALVDCSVALAKPFDKFQFERLGYFSVDPDSHQGQVVFNRTVTLKEDPGKV.

N-acetylalanine is present on alanine 2. The residue at position 70 (serine 70) is a Phosphoserine. Residues 271-273 and 277-283 each bind ATP; these read EPN and HIGHAKA. Residue aspartate 303 participates in L-glutamine binding. Lysine 309 bears the N6-acetyllysine mark. Tyrosine 438 contacts L-glutamine. ATP contacts are provided by residues threonine 457, 486-487, and 494-496; these read RL and VSK. Serine 495 carries the post-translational modification Phosphoserine.

This sequence belongs to the class-I aminoacyl-tRNA synthetase family. As to quaternary structure, monomer. Part of a multisubunit complex that groups tRNA ligases for Arg (RARS1), Asp (DARS1), Gln (QARS1), Ile (IARS1), Leu (LARS1), Lys (KARS1), Met (MARS1) the bifunctional ligase for Glu and Pro (EPRS1) and the auxiliary subunits AIMP1/p43, AIMP2/p38 and EEF1E1/p18. Interacts with RARS1. Part of a complex composed of RARS1, QARS1 and AIMP1. In terms of tissue distribution, detected in dorsal root ganglia (at protein level). Detected in dorsal root ganglia.

Its subcellular location is the cytoplasm. It localises to the cytosol. The enzyme catalyses tRNA(Gln) + L-glutamine + ATP = L-glutaminyl-tRNA(Gln) + AMP + diphosphate. Its function is as follows. Glutamine--tRNA ligase. Plays a critical role in brain development. This Rattus norvegicus (Rat) protein is Glutamine--tRNA ligase (Qars1).